The chain runs to 105 residues: Small ribosomal subunit protein uS10 (105 aa).

The protein belongs to the universal ribosomal protein uS10 family. In terms of assembly, part of the 30S ribosomal subunit.

In terms of biological role, involved in the binding of tRNA to the ribosomes. In Anaplasma marginale (strain Florida), this protein is Small ribosomal subunit protein uS10.